The chain runs to 109 residues: uncharacterized protein (109 aa).

A helical membrane pass occupies residues 63 to 85 (LFVKTFFACTYIIMLAFQVYIFL).

The protein resides in the membrane. This is an uncharacterized protein from Saccharomyces cerevisiae (strain ATCC 204508 / S288c) (Baker's yeast).